The following is a 110-amino-acid chain: Large ribosomal subunit protein uL22 (110 aa).

It belongs to the universal ribosomal protein uL22 family. As to quaternary structure, part of the 50S ribosomal subunit.

Its function is as follows. This protein binds specifically to 23S rRNA; its binding is stimulated by other ribosomal proteins, e.g. L4, L17, and L20. It is important during the early stages of 50S assembly. It makes multiple contacts with different domains of the 23S rRNA in the assembled 50S subunit and ribosome. In terms of biological role, the globular domain of the protein is located near the polypeptide exit tunnel on the outside of the subunit, while an extended beta-hairpin is found that lines the wall of the exit tunnel in the center of the 70S ribosome. The sequence is that of Large ribosomal subunit protein uL22 from Syntrophotalea carbinolica (strain DSM 2380 / NBRC 103641 / GraBd1) (Pelobacter carbinolicus).